Here is a 138-residue protein sequence, read N- to C-terminus: Glutathione S-transferase Mu 5 (138 aa).

Ser1 bears the Phosphoserine mark. A GST N-terminal domain is found at 1 to 71 (SMVLGYWDIR…KITQSNAILR (71 aa)). Residues 6 to 7 (YW), 39 to 43 (WLDVK), 52 to 53 (NL), and 65 to 66 (QS) each bind glutathione. The region spanning 72 to 135 (IRVDIMENQI…FMCRCFKMPI (64 aa)) is the GST C-terminal domain.

It belongs to the GST superfamily. Mu family. In terms of assembly, homodimer.

The protein localises to the cytoplasm. It catalyses the reaction RX + glutathione = an S-substituted glutathione + a halide anion + H(+). Functionally, conjugation of reduced glutathione to a wide number of exogenous and endogenous hydrophobic electrophiles. In Mesocricetus auratus (Golden hamster), this protein is Glutathione S-transferase Mu 5.